Reading from the N-terminus, the 535-residue chain is Ankyrin repeat domain-containing protein 34C (535 aa).

4 ANK repeats span residues 10 to 39 (TDGN…YINE), 43 to 80 (KGET…DPNI), 84 to 114 (SGKT…DPSL), and 118 to 147 (TGAS…AKGK). Disordered regions lie at residues 159 to 181 (SGTK…DRHS) and 214 to 237 (AGHP…RKVS). Over residues 216–225 (HPSSCNTSKA) the composition is skewed to polar residues. A Phosphoserine modification is found at Ser-301. The interval 381-444 (DLDIQPGPDP…RRRPPHLLER (64 aa)) is disordered. At Ser-447 the chain carries Phosphoserine.

This sequence belongs to the ANKRD34 family.

The protein is Ankyrin repeat domain-containing protein 34C (ANKRD34C) of Homo sapiens (Human).